Reading from the N-terminus, the 336-residue chain is Retinol dehydrogenase 10-B (336 aa).

A helical; Signal-anchor transmembrane segment spans residues 7 to 27 (LFVVTFKIIWSFVLAGAKWFI). 40–64 (VITGAGSGLGRLFALEFARRRATLV) lines the NADP(+) pocket. Ser-192 serves as a coordination point for substrate. The active-site Proton acceptor is Tyr-205.

The protein belongs to the short-chain dehydrogenases/reductases (SDR) family.

The protein resides in the microsome membrane. Its subcellular location is the endoplasmic reticulum membrane. It carries out the reaction all-trans-retinol + NADP(+) = all-trans-retinal + NADPH + H(+). It functions in the pathway cofactor metabolism; retinol metabolism. Retinol dehydrogenase with a clear preference for NADP. Converts all-trans-retinol to all-trans-retinal. Has no detectable activity towards 11-cis-retinol, 9-cis-retinol and 13-cis-retinol. This chain is Retinol dehydrogenase 10-B (rdh10b), found in Danio rerio (Zebrafish).